Here is a 531-residue protein sequence, read N- to C-terminus: Probable inactive beta-glucosidase 25 (531 aa).

The N-terminal stretch at 1–24 (MALKAILFLGLFLVVIVSPITVYG) is a signal peptide. Residues glutamine 53 and 202 to 203 (NE) contribute to the a beta-D-glucoside site. The active-site Proton donor is glutamate 203. A disulfide bridge connects residues cysteine 222 and cysteine 230. A beta-D-glucoside-binding positions include phenylalanine 348 and 477-478 (EW).

Belongs to the glycosyl hydrolase 1 family.

The chain is Probable inactive beta-glucosidase 25 from Arabidopsis thaliana (Mouse-ear cress).